Consider the following 497-residue polypeptide: Angiopoietin-1 (497 aa).

Residues 1–19 (MTVFLSFAFFAAILTHIGC) form the signal peptide. A coiled-coil region spans residues 81 to 119 (QKLQHLEHVMENYTQWLQKLENYIVENMKSEMAQIQQNA). N-linked (GlcNAc...) asparagine glycans are attached at residues N92, N122, N154, N243, and N294. Positions 153–261 (LNQTSRLEIQ…LELMDTVHNL (109 aa)) form a coiled coil. The region spanning 276 to 496 (REEEKPFRDC…STTMMIRPLD (221 aa)) is the Fibrinogen C-terminal domain. Intrachain disulfides connect C285–C314 and C438–C451.

In terms of assembly, homooligomer. Interacts with TEK/TIE2. Interacts with SVEP1/polydom. Interacts with THBD; this interaction significantly inhibits the generation of activated PC and TAFIa/CPB2 by the thrombin/thrombomodulin complex.

The protein resides in the secreted. Binds and activates TIE2 receptor by inducing its tyrosine phosphorylation. Implicated in endothelial developmental processes later and distinct from that of VEGF. Appears to play a crucial role in mediating reciprocal interactions between the endothelium and surrounding matrix and mesenchyme. Mediates blood vessel maturation/stability. It may play an important role in the heart early development. The chain is Angiopoietin-1 (Angpt1) from Rattus norvegicus (Rat).